Here is a 64-residue protein sequence, read N- to C-terminus: Relaxin (64 aa).

Cystine bridges form between Cys-11–Cys-51, Cys-23–Cys-64, and Cys-50–Cys-55.

The protein belongs to the insulin family. Heterodimer of a B chain and an A chain linked by two disulfide bonds.

The protein resides in the secreted. The protein is Relaxin of Leucoraja erinaceus (Little skate).